We begin with the raw amino-acid sequence, 249 residues long: Methylthioribulose-1-phosphate dehydratase (249 aa).

2 residues coordinate Zn(2+): His103 and His105.

Belongs to the aldolase class II family. MtnB subfamily. The cofactor is Zn(2+).

The catalysed reaction is 5-(methylsulfanyl)-D-ribulose 1-phosphate = 5-methylsulfanyl-2,3-dioxopentyl phosphate + H2O. Its pathway is amino-acid biosynthesis; L-methionine biosynthesis via salvage pathway; L-methionine from S-methyl-5-thio-alpha-D-ribose 1-phosphate: step 2/6. In terms of biological role, catalyzes the dehydration of methylthioribulose-1-phosphate (MTRu-1-P) into 2,3-diketo-5-methylthiopentyl-1-phosphate (DK-MTP-1-P). This Leptospira interrogans serogroup Icterohaemorrhagiae serovar Lai (strain 56601) protein is Methylthioribulose-1-phosphate dehydratase.